The primary structure comprises 81 residues: Conotoxin ArMKLT2-0311 (81 aa).

The signal sequence occupies residues 1 to 22 (MKLTCVLIVALLFLTACQLTTA). Over residues 23–34 (DDSRDKQEDPLV) the composition is skewed to basic and acidic residues. The segment at 23 to 45 (DDSRDKQEDPLVRSHRKMQKSED) is disordered. The propeptide occupies 23–51 (DDSRDKQEDPLVRSHRKMQKSEDPKMAER). Intrachain disulfides connect Cys52/Cys67, Cys59/Cys71, and Cys66/Cys80.

The protein belongs to the conotoxin O1 superfamily. Expressed by the venom duct.

Its subcellular location is the secreted. In Conus arenatus (Sand-dusted cone), this protein is Conotoxin ArMKLT2-0311.